A 497-amino-acid chain; its full sequence is Galactose/methyl galactoside import ATP-binding protein MglA 1 (497 aa).

2 ABC transporter domains span residues leucine 6 to aspartate 243 and glycine 256 to methionine 494. Glycine 38–serine 45 contacts ATP.

Belongs to the ABC transporter superfamily. Galactose/methyl galactoside importer (TC 3.A.1.2.3) family. As to quaternary structure, the complex is composed of one ATP-binding protein (MglA), two transmembrane proteins (MglC) and a solute-binding protein (MglB).

It localises to the cell inner membrane. It catalyses the reaction D-galactose(out) + ATP + H2O = D-galactose(in) + ADP + phosphate + H(+). The enzyme catalyses methyl beta-D-galactoside(out) + ATP + H2O = methyl beta-D-galactoside(in) + ADP + phosphate + H(+). In terms of biological role, part of the ABC transporter complex MglABC involved in galactose/methyl galactoside import. Responsible for energy coupling to the transport system. This is Galactose/methyl galactoside import ATP-binding protein MglA 1 from Photobacterium profundum (strain SS9).